The primary structure comprises 78 residues: U-scoloptoxin(04)-Er1e (78 aa).

Positions 1–24 (MTRHLIFAAMLLVCLFVCWNAVGA) are cleaved as a signal peptide. A propeptide spanning residues 25–28 (RDAR) is cleaved from the precursor.

The protein belongs to the scoloptoxin-04 family. Contains 2 disulfide bonds. In terms of tissue distribution, expressed by the venom gland.

The protein localises to the secreted. The polypeptide is U-scoloptoxin(04)-Er1e (Ethmostigmus rubripes (Giant centipede)).